A 416-amino-acid chain; its full sequence is Major facilitator superfamily domain-containing protein 3 (416 aa).

12 helical membrane-spanning segments follow: residues 10–30, 40–60, 68–88, 99–119, 139–158, 170–190, 204–224, 252–272, 295–315, 324–344, 365–385, and 392–412; these read GLYL…PILL, VGLT…APLV, VWLT…AVLP, TTVM…DVAL, QVVA…LVFF, LTAT…LGRL, YLLQ…FVLT, LWSG…GGAL, LGGL…GASL, AALL…TATF, FLAT…GVLA, and LCFA…RLAP.

It belongs to the major facilitator superfamily.

It is found in the membrane. The chain is Major facilitator superfamily domain-containing protein 3 (Mfsd3) from Rattus norvegicus (Rat).